The following is a 378-amino-acid chain: N-acetyldiaminopimelate deacetylase (378 aa).

Asp-65 is an active-site residue. Residue Glu-124 is the Proton acceptor of the active site.

It belongs to the peptidase M20A family. N-acetyldiaminopimelate deacetylase subfamily.

The enzyme catalyses N-acetyl-(2S,6S)-2,6-diaminopimelate + H2O = (2S,6S)-2,6-diaminopimelate + acetate. It functions in the pathway amino-acid biosynthesis; L-lysine biosynthesis via DAP pathway; LL-2,6-diaminopimelate from (S)-tetrahydrodipicolinate (acetylase route): step 3/3. Catalyzes the conversion of N-acetyl-diaminopimelate to diaminopimelate and acetate. The chain is N-acetyldiaminopimelate deacetylase from Anoxybacillus flavithermus (strain DSM 21510 / WK1).